The sequence spans 172 residues: Adenine phosphoribosyltransferase (172 aa).

It belongs to the purine/pyrimidine phosphoribosyltransferase family. In terms of assembly, homodimer.

The protein resides in the cytoplasm. The enzyme catalyses AMP + diphosphate = 5-phospho-alpha-D-ribose 1-diphosphate + adenine. It functions in the pathway purine metabolism; AMP biosynthesis via salvage pathway; AMP from adenine: step 1/1. In terms of biological role, catalyzes a salvage reaction resulting in the formation of AMP, that is energically less costly than de novo synthesis. The chain is Adenine phosphoribosyltransferase from Synechococcus sp. (strain CC9605).